Reading from the N-terminus, the 293-residue chain is DOMON domain-containing protein FRRS1L (293 aa).

Positions methionine 1 to alanine 28 are cleaved as a signal peptide. Residues serine 29 to aspartate 60 are disordered. Positions alanine 46 to aspartate 60 are enriched in basic and acidic residues. Residues cysteine 119 to alanine 234 enclose the DOMON domain. Residues threonine 271–glycine 291 traverse the membrane as a helical segment.

Component of the outer core of AMPAR complex. AMPAR complex consists of an inner core made of 4 pore-forming GluA/GRIA proteins (GRIA1, GRIA2, GRIA3 and GRIA4) and 4 major auxiliary subunits arranged in a twofold symmetry. One of the two pairs of distinct binding sites is occupied either by CNIH2, CNIH3 or CACNG2, CACNG3. The other harbors CACNG2, CACNG3, CACNG4, CACNG8 or GSG1L. This inner core of AMPAR complex is complemented by outer core constituents binding directly to the GluA/GRIA proteins at sites distinct from the interaction sites of the inner core constituents. Outer core constituents include at least PRRT1, PRRT2, CKAMP44/SHISA9, FRRS1L and NRN1. The proteins of the inner and outer core serve as a platform for other, more peripherally associated AMPAR constituents. Alone or in combination, these auxiliary subunits control the gating and pharmacology of the AMPAR complex and profoundly impact their biogenesis and protein processing. Expressed in the brain (at protein level). In embryos expression is evident in the ventral forebrain, but a lower level is seen in the remainder of the embryos. In the adult brain, expressed in the cortex, cerebellum, hippocampus and basal ganglia.

Its subcellular location is the cell membrane. The protein localises to the synapse. Important modulator of glutamate signaling pathway. The protein is DOMON domain-containing protein FRRS1L (Frrs1l) of Mus musculus (Mouse).